The following is a 503-amino-acid chain: Aromatase (503 aa).

2 helical membrane-spanning segments follow: residues 19 to 39 and 51 to 71; these read EVMP…FFVW and GYCM…MGLG. The interval 294–324 is substrate-binding pocket; that stretch reads ENVNQCILEMMIAAPDTLSVTVFFMLCLIAQ. 2 residues coordinate substrate: Asp309 and Met374. Cys437 contributes to the heme binding site.

Belongs to the cytochrome P450 family. Heme is required as a cofactor. As to expression, expressed in placenta. Highly expressed in follicles (0 hour:hCG), followed by a drop (12-24 hour:hCG) and by an increase (30-39 hour:hCG). Highly expressed in corpora lutea. Also expressed in granulosa cell layer. Not expressed in theca interna.

Its subcellular location is the endoplasmic reticulum membrane. It is found in the microsome membrane. It carries out the reaction testosterone + 3 reduced [NADPH--hemoprotein reductase] + 3 O2 = 17beta-estradiol + formate + 3 oxidized [NADPH--hemoprotein reductase] + 4 H2O + 4 H(+). The catalysed reaction is androst-4-ene-3,17-dione + 3 reduced [NADPH--hemoprotein reductase] + 3 O2 = estrone + formate + 3 oxidized [NADPH--hemoprotein reductase] + 4 H2O + 4 H(+). The enzyme catalyses androst-4-ene-3,17-dione + reduced [NADPH--hemoprotein reductase] + O2 = 19-hydroxyandrost-4-ene-3,17-dione + oxidized [NADPH--hemoprotein reductase] + H2O + H(+). It catalyses the reaction 19-hydroxyandrost-4-ene-3,17-dione + reduced [NADPH--hemoprotein reductase] + O2 = 19-oxo-androst-4-ene-3,17-dione + oxidized [NADPH--hemoprotein reductase] + 2 H2O + H(+). It carries out the reaction 19-oxo-androst-4-ene-3,17-dione + reduced [NADPH--hemoprotein reductase] + O2 = estrone + formate + oxidized [NADPH--hemoprotein reductase] + H2O + 2 H(+). The catalysed reaction is estrone + reduced [NADPH--hemoprotein reductase] + O2 = 2-hydroxyestrone + oxidized [NADPH--hemoprotein reductase] + H2O + H(+). The enzyme catalyses 17beta-hydroxy-5alpha-androstan-3-one + reduced [NADPH--hemoprotein reductase] + O2 = 17beta,19-dihydroxy-3-oxo-5alpha-androstanone + oxidized [NADPH--hemoprotein reductase] + H2O + H(+). It catalyses the reaction 17beta,19-dihydroxy-3-oxo-5alpha-androstanone + reduced [NADPH--hemoprotein reductase] + O2 = 17beta-hydroxy-3,19-dioxo-5alpha-androstanone + oxidized [NADPH--hemoprotein reductase] + 2 H2O + H(+). It carries out the reaction 17beta-hydroxy-3,19-dioxo-5alpha-androstanone + reduced [NADPH--hemoprotein reductase] + O2 = 17beta-hydroxy-3-oxo-19-nor-5alpha-androst-1-ene + formate + oxidized [NADPH--hemoprotein reductase] + H2O + 2 H(+). The protein operates within steroid hormone biosynthesis. Its function is as follows. A cytochrome P450 monooxygenase that catalyzes the conversion of C19 androgens, androst-4-ene-3,17-dione (androstenedione) and testosterone to the C18 estrogens, estrone and estradiol, respectively. Catalyzes three successive oxidations of C19 androgens: two conventional oxidations at C19 yielding 19-hydroxy and 19-oxo/19-aldehyde derivatives, followed by a third oxidative aromatization step that involves C1-beta hydrogen abstraction combined with cleavage of the C10-C19 bond to yield a phenolic A ring and formic acid. Alternatively, the third oxidative reaction yields a 19-norsteroid and formic acid. Converts dihydrotestosterone to delta1,10-dehydro 19-nordihydrotestosterone and may play a role in homeostasis of this potent androgen. Also displays 2-hydroxylase activity toward estrone. Mechanistically, uses molecular oxygen inserting one oxygen atom into a substrate, and reducing the second into a water molecule, with two electrons provided by NADPH via cytochrome P450 reductase (CPR; NADPH-ferrihemoprotein reductase). In Equus caballus (Horse), this protein is Aromatase (CYP19A1).